The following is a 456-amino-acid chain: Alcohol acyltransferase 16 (456 aa).

Catalysis depends on proton acceptor residues His-167 and Asp-382.

This sequence belongs to the plant acyltransferase family. In terms of tissue distribution, expressed in fruit.

It catalyses the reaction 3-(methylsulfanyl)propanoyl-CoA + butan-1-ol = butyl 3-(methylsulfanyl)propanoate + CoA. The enzyme catalyses ethanol + benzoyl-CoA = ethyl benzoate + CoA. The catalysed reaction is butan-1-ol + benzoyl-CoA = butyl benzoate + CoA. It carries out the reaction 2-(methylsulfanyl)acetyl-CoA + butan-1-ol = butyl 2-(methylsulfanyl)acetate + CoA. In terms of biological role, involved in the biosynthesis of volatile esters which confer kiwifruit flavor. Alcohol acyl transferase that can use a wide range of alcohols as substrate to produce esters. Exhibits benzoyl-CoA:alcohol O-acyltransferase activity. In Actinidia chinensis var. chinensis (Chinese soft-hair kiwi), this protein is Alcohol acyltransferase 16.